A 348-amino-acid chain; its full sequence is Holliday junction branch migration complex subunit RuvB (348 aa).

A large ATPase domain (RuvB-L) region spans residues 4-184 (ADRLIAASGR…FGIVQRLEFY (181 aa)). ATP-binding positions include isoleucine 23, arginine 24, glycine 65, lysine 68, threonine 69, threonine 70, 131-133 (EDF), arginine 174, tyrosine 184, and arginine 221. Threonine 69 is a binding site for Mg(2+). The tract at residues 185–255 (SDKDLATIVS…VADMALNLLD (71 aa)) is small ATPAse domain (RuvB-S). Residues 258-348 (ERGFDHSDRR…GGDFSEPGDE (91 aa)) are head domain (RuvB-H). DNA-binding residues include arginine 294, arginine 313, and arginine 318.

Belongs to the RuvB family. In terms of assembly, homohexamer. Forms an RuvA(8)-RuvB(12)-Holliday junction (HJ) complex. HJ DNA is sandwiched between 2 RuvA tetramers; dsDNA enters through RuvA and exits via RuvB. An RuvB hexamer assembles on each DNA strand where it exits the tetramer. Each RuvB hexamer is contacted by two RuvA subunits (via domain III) on 2 adjacent RuvB subunits; this complex drives branch migration. In the full resolvosome a probable DNA-RuvA(4)-RuvB(12)-RuvC(2) complex forms which resolves the HJ.

It is found in the cytoplasm. The enzyme catalyses ATP + H2O = ADP + phosphate + H(+). The RuvA-RuvB-RuvC complex processes Holliday junction (HJ) DNA during genetic recombination and DNA repair, while the RuvA-RuvB complex plays an important role in the rescue of blocked DNA replication forks via replication fork reversal (RFR). RuvA specifically binds to HJ cruciform DNA, conferring on it an open structure. The RuvB hexamer acts as an ATP-dependent pump, pulling dsDNA into and through the RuvAB complex. RuvB forms 2 homohexamers on either side of HJ DNA bound by 1 or 2 RuvA tetramers; 4 subunits per hexamer contact DNA at a time. Coordinated motions by a converter formed by DNA-disengaged RuvB subunits stimulates ATP hydrolysis and nucleotide exchange. Immobilization of the converter enables RuvB to convert the ATP-contained energy into a lever motion, pulling 2 nucleotides of DNA out of the RuvA tetramer per ATP hydrolyzed, thus driving DNA branch migration. The RuvB motors rotate together with the DNA substrate, which together with the progressing nucleotide cycle form the mechanistic basis for DNA recombination by continuous HJ branch migration. Branch migration allows RuvC to scan DNA until it finds its consensus sequence, where it cleaves and resolves cruciform DNA. The sequence is that of Holliday junction branch migration complex subunit RuvB from Pseudomonas putida (strain GB-1).